The following is a 272-amino-acid chain: uncharacterized protein (272 aa).

This is an uncharacterized protein from Archaeoglobus fulgidus (strain ATCC 49558 / DSM 4304 / JCM 9628 / NBRC 100126 / VC-16).